A 337-amino-acid polypeptide reads, in one-letter code: tRNA-cytidine(32) 2-sulfurtransferase (337 aa).

Positions 71–76 (SGGKDS) match the PP-loop motif motif. [4Fe-4S] cluster is bound by residues Cys146, Cys149, and Cys237.

This sequence belongs to the TtcA family. In terms of assembly, homodimer. Requires Mg(2+) as cofactor. The cofactor is [4Fe-4S] cluster.

It localises to the cytoplasm. It carries out the reaction cytidine(32) in tRNA + S-sulfanyl-L-cysteinyl-[cysteine desulfurase] + AH2 + ATP = 2-thiocytidine(32) in tRNA + L-cysteinyl-[cysteine desulfurase] + A + AMP + diphosphate + H(+). It functions in the pathway tRNA modification. Functionally, catalyzes the ATP-dependent 2-thiolation of cytidine in position 32 of tRNA, to form 2-thiocytidine (s(2)C32). The sulfur atoms are provided by the cysteine/cysteine desulfurase (IscS) system. The polypeptide is tRNA-cytidine(32) 2-sulfurtransferase (Burkholderia vietnamiensis (strain G4 / LMG 22486) (Burkholderia cepacia (strain R1808))).